The primary structure comprises 79 residues: Protein FAM236A (79 aa).

The protein belongs to the FAM236 family.

The protein is Protein FAM236A of Homo sapiens (Human).